Reading from the N-terminus, the 373-residue chain is SH3 domain-binding protein 5-like (373 aa).

Residues 1–53 (MEGKEGPSCEVRLPTPGAEREGPIHPELGAFGETASNTIKLSESSNDGKKEEI) are disordered. The span at 34 to 45 (TASNTIKLSESS) shows a compositional bias: polar residues. Coiled-coil stretches lie at residues 55 to 98 (EELD…ESAR) and 170 to 272 (WQEM…SEEI). Disordered stretches follow at residues 276–305 (RTQS…TGPP) and 344–373 (TGAV…SVSL). Basic and acidic residues predominate over residues 344 to 358 (TGAVECGGSRERGGD).

This sequence belongs to the SH3BP5 family.

Functions as a guanine nucleotide exchange factor (GEF) for rab11a. The polypeptide is SH3 domain-binding protein 5-like (sh3bp5l) (Xenopus tropicalis (Western clawed frog)).